The following is a 263-amino-acid chain: Endonuclease 8 (263 aa).

Proline 2 serves as the catalytic Schiff-base intermediate with DNA. Glutamate 3 functions as the Proton donor in the catalytic mechanism. Lysine 53 serves as the catalytic Proton donor; for beta-elimination activity. Residues glutamine 70, arginine 125, and asparagine 169 each coordinate DNA. The FPG-type zinc-finger motif lies at 229–263 (KVFHREGKACERCGGVIERSTLSSRPFYGCPVCQK). Arginine 253 serves as the catalytic Proton donor; for delta-elimination activity.

Belongs to the FPG family. It depends on Zn(2+) as a cofactor.

The catalysed reaction is 2'-deoxyribonucleotide-(2'-deoxyribose 5'-phosphate)-2'-deoxyribonucleotide-DNA = a 3'-end 2'-deoxyribonucleotide-(2,3-dehydro-2,3-deoxyribose 5'-phosphate)-DNA + a 5'-end 5'-phospho-2'-deoxyribonucleoside-DNA + H(+). In terms of biological role, involved in base excision repair of DNA damaged by oxidation or by mutagenic agents. Acts as a DNA glycosylase that recognizes and removes damaged bases. Has a preference for oxidized pyrimidines, such as thymine glycol, 5,6-dihydrouracil and 5,6-dihydrothymine. Has AP (apurinic/apyrimidinic) lyase activity and introduces nicks in the DNA strand. Cleaves the DNA backbone by beta-delta elimination to generate a single-strand break at the site of the removed base with both 3'- and 5'-phosphates. This Enterobacter sp. (strain 638) protein is Endonuclease 8.